Reading from the N-terminus, the 134-residue chain is Histone H2A (134 aa).

Positions 1 to 11 are enriched in gly residues; it reads MTGGGKSGGKA. A disordered region spans residues 1–25; the sequence is MTGGGKSGGKASGSKNAQSRSSKAG. 2 positions are modified to N6-acetyllysine: Lys6 and Lys10. Gln107 is modified (N5-methylglutamine). Position 131 is a phosphoserine (Ser131). A [ST]-Q motif motif is present at residues 131 to 132; the sequence is SQ.

The protein belongs to the histone H2A family. The nucleosome is a histone octamer containing two molecules each of H2A, H2B, H3 and H4 assembled in one H3-H4 heterotetramer and two H2A-H2B heterodimers. The octamer wraps approximately 147 bp of DNA. In terms of processing, phosphorylated to form H2AS128ph (gamma-H2A) in response to DNA double-strand breaks (DSBs) generated by exogenous genotoxic agents and by stalled replication forks. Phosphorylation is dependent on the DNA damage checkpoint kinases mec-1/ATR and tel-1/ATM, spreads on either side of a detected DSB site and may mark the surrounding chromatin for recruitment of proteins required for DNA damage signaling and repair. Gamma-H2A is removed from the DNA prior to the strand invasion-primer extension step of the repair process and subsequently dephosphorylated. Dephosphorylation is necessary for efficient recovery from the DNA damage checkpoint. Acetylated by esa-1 to form H2AK4ac and H2AK7ac.

Its subcellular location is the nucleus. It is found in the chromosome. Its function is as follows. Core component of nucleosome which plays a central role in DNA double strand break (DSB) repair. Nucleosomes wrap and compact DNA into chromatin, limiting DNA accessibility to the cellular machineries which require DNA as a template. Histones thereby play a central role in transcription regulation, DNA repair, DNA replication and chromosomal stability. DNA accessibility is regulated via a complex set of post-translational modifications of histones, also called histone code, and nucleosome remodeling. This Neurospora crassa (strain ATCC 24698 / 74-OR23-1A / CBS 708.71 / DSM 1257 / FGSC 987) protein is Histone H2A (hh2a).